We begin with the raw amino-acid sequence, 541 residues long: Apolipoprotein N-acyltransferase (541 aa).

Helical transmembrane passes span 21 to 41, 54 to 74, 89 to 109, 116 to 136, 157 to 177, and 189 to 209; these read MSWF…WYSL, LTSL…SWML, VLIS…FFIV, ILWC…YFLC, FGGF…GISF, and YVWL…YEYL. Residues 219-500 enclose the CN hydrolase domain; it reads LRVAVIQPAS…PGVLQVSLPM (282 aa). E265 (proton acceptor) is an active-site residue. The active site involves K350. The active-site Nucleophile is C405. Residues 506–526 traverse the membrane as a helical segment; that stretch reads LYAFWGDFPMIFLSLLSIGCI.

This sequence belongs to the CN hydrolase family. Apolipoprotein N-acyltransferase subfamily.

The protein resides in the cell inner membrane. The enzyme catalyses N-terminal S-1,2-diacyl-sn-glyceryl-L-cysteinyl-[lipoprotein] + a glycerophospholipid = N-acyl-S-1,2-diacyl-sn-glyceryl-L-cysteinyl-[lipoprotein] + a 2-acyl-sn-glycero-3-phospholipid + H(+). It functions in the pathway protein modification; lipoprotein biosynthesis (N-acyl transfer). Catalyzes the phospholipid dependent N-acylation of the N-terminal cysteine of apolipoprotein, the last step in lipoprotein maturation. This is Apolipoprotein N-acyltransferase from Chlamydia caviae (strain ATCC VR-813 / DSM 19441 / 03DC25 / GPIC) (Chlamydophila caviae).